The chain runs to 142 residues: Hemoglobin subunit alpha-A (142 aa).

In terms of domain architecture, Globin spans 2–142 (VLSAADKTNV…VGAVLTAKYR (141 aa)). O2 is bound at residue histidine 59. Heme b is bound at residue histidine 88.

It belongs to the globin family. Heterotetramer of two alpha chains and two beta chains. In terms of tissue distribution, red blood cells.

Involved in oxygen transport from the lung to the various peripheral tissues. The polypeptide is Hemoglobin subunit alpha-A (HBAA) (Mareca penelope (Eurasian wigeon)).